The chain runs to 227 residues: MITNAISKIIKYDFKNTQLLNEALTHPSVLSKDNNNFNYERLEFLGDAVLNLVVSEMLFNIFPYDTEGNLAKKKTALVCGTKLVEIAQSINLGIFIIMSDGERSCGGANNSNNLENALEALIGAIYLDGGLKAAKDFIFLFWKNSATHMKVPPQDAKTILQEWAQSKGFPAPSYHIINKSGPDHNPCFTVEVRINSHETLHATGHNKKLAEQKAASLMLAKINYKIK.

The RNase III domain maps to 3–130 (TNAISKIIKY…LIGAIYLDGG (128 aa)). Glu43 contacts Mg(2+). Residue Asp47 is part of the active site. Asn116 and Glu119 together coordinate Mg(2+). The active site involves Glu119. The DRBM domain occupies 155–224 (DAKTILQEWA…ASLMLAKINY (70 aa)).

The protein belongs to the ribonuclease III family. Homodimer. Mg(2+) serves as cofactor.

The protein resides in the cytoplasm. The catalysed reaction is Endonucleolytic cleavage to 5'-phosphomonoester.. Functionally, digests double-stranded RNA. Involved in the processing of primary rRNA transcript to yield the immediate precursors to the large and small rRNAs (23S and 16S). Processes some mRNAs, and tRNAs when they are encoded in the rRNA operon. Processes pre-crRNA and tracrRNA of type II CRISPR loci if present in the organism. The protein is Ribonuclease 3 of Ehrlichia ruminantium (strain Gardel).